Reading from the N-terminus, the 507-residue chain is MWELVGLLLLILAYFFWVKSKTPGAKLPRSLPSLPLVGSLPFLPRRGHMHVNFFKLQEKYGPIYSLRLGTTTTVIIGHYQLAREVLIKKGKEFSGRPQMVTQSLLSDQGKGVAFADAGSSWHLHRKLVFSTFSLFKDGQKLEKLICQEAKSLCDMMLAHDKESIDLSTPIFMSVTNIICAICFNISYEKNDPKLTAIKTFTEGIVDATGDRNLVDIFPWLTIFPNKGLEVIKGYAKVRNEVLTGIFEKCREKFDSQSISSLTDILIQAKMNSDNNNSCEGRDPDVFSDRHILATVGDIFGAGIETTTTVLKWILAFLVHNPEVKKKIQKEIDQYVGFSRTPTFNDRSHLLMLEATIREVLRIRPVAPMLIPHKANVDSSIGEFTVPKDTHVVVNLWALHHDENEWDQPDQFMPERFLDPTGSHLITPTQSYLPFGAGPRSCIGEALARQELFVFTALLLQRFDLDVSDDKQLPRLEGDPKVVFLIDPFKVKITVRQAWMDAQAEVST.

Cys-441 lines the heme pocket.

The protein belongs to the cytochrome P450 family. It depends on heme as a cofactor.

It localises to the endoplasmic reticulum membrane. The protein localises to the microsome membrane. It carries out the reaction a C21-steroid + reduced [NADPH--hemoprotein reductase] + O2 = a 17alpha-hydroxy-C21-steroid + oxidized [NADPH--hemoprotein reductase] + H2O + H(+). The enzyme catalyses progesterone + reduced [NADPH--hemoprotein reductase] + O2 = 17alpha-hydroxyprogesterone + oxidized [NADPH--hemoprotein reductase] + H2O + H(+). It catalyses the reaction pregnenolone + reduced [NADPH--hemoprotein reductase] + O2 = 17alpha-hydroxypregnenolone + oxidized [NADPH--hemoprotein reductase] + H2O + H(+). The catalysed reaction is 17alpha-hydroxyprogesterone + reduced [NADPH--hemoprotein reductase] + O2 = androst-4-ene-3,17-dione + acetate + oxidized [NADPH--hemoprotein reductase] + H2O + 2 H(+). It carries out the reaction 17alpha-hydroxyprogesterone + reduced [NADPH--hemoprotein reductase] + O2 = 16alpha,17alpha-dihydroxyprogesterone + oxidized [NADPH--hemoprotein reductase] + H2O + H(+). The enzyme catalyses 16alpha,17alpha-dihydroxyprogesterone + reduced [NADPH--hemoprotein reductase] + O2 = 6beta,16alpha,17alpha-trihydroxyprogesterone + oxidized [NADPH--hemoprotein reductase] + H2O + H(+). It catalyses the reaction 17alpha-hydroxypregnenolone + reduced [NADPH--hemoprotein reductase] + O2 = 3beta-hydroxyandrost-5-en-17-one + acetate + oxidized [NADPH--hemoprotein reductase] + H2O + 2 H(+). The catalysed reaction is 16alpha,17alpha-dihydroxypregnenolone + reduced [NADPH--hemoprotein reductase] + O2 = 3beta,16alpha-dihydroxy-androst-5-en-17-one + acetate + oxidized [NADPH--hemoprotein reductase] + H2O + 2 H(+). It carries out the reaction 3beta-hydroxyandrost-5-en-17-one + reduced [NADPH--hemoprotein reductase] + O2 = 3beta,16alpha-dihydroxy-androst-5-en-17-one + oxidized [NADPH--hemoprotein reductase] + H2O + H(+). The enzyme catalyses androst-4-ene-3,17-dione + reduced [NADPH--hemoprotein reductase] + O2 = 16alpha-hydroxyandrost-4-ene-3,17-dione + oxidized [NADPH--hemoprotein reductase] + H2O + H(+). Its pathway is steroid hormone biosynthesis. It functions in the pathway steroid biosynthesis; glucocorticoid biosynthesis. Its activity is regulated as follows. Regulated predominantly by intracellular cAMP levels. The 17,20-lyase activity is stimulated by cytochrome b5, which acts as an allosteric effector increasing the Vmax of the lyase activity. A cytochrome P450 monooxygenase involved in corticoid and androgen biosynthesis. Catalyzes 17-alpha hydroxylation of C21 steroids, which is common for both pathways. A second oxidative step, required only for androgen synthesis, involves an acyl-carbon cleavage. The 17-alpha hydroxy intermediates, as part of adrenal glucocorticoids biosynthesis pathway, are precursors of cortisol. Hydroxylates steroid hormones, pregnenolone and progesterone to form 17-alpha hydroxy metabolites, followed by the cleavage of the C17-C20 bond to form C19 steroids, dehydroepiandrosterone (DHEA) and androstenedione. Has 16-alpha hydroxylase activity. Catalyzes 16-alpha hydroxylation of 17-alpha hydroxy pregnenolone, followed by the cleavage of the C17-C20 bond to form 16-alpha-hydroxy DHEA. Also 16-alpha hydroxylates androgens, relevant for estriol synthesis. Mechanistically, uses molecular oxygen inserting one oxygen atom into a substrate, and reducing the second into a water molecule, with two electrons provided by NADPH via cytochrome P450 reductase (CPR; NADPH-ferrihemoprotein reductase). The chain is Steroid 17-alpha-hydroxylase/17,20 lyase (Cyp17a1) from Rattus norvegicus (Rat).